The chain runs to 381 residues: Queuine tRNA-ribosyltransferase (381 aa).

Asp92 (proton acceptor) is an active-site residue. Substrate-binding positions include 92 to 96 (DSGGF), Asp146, Gln190, and Gly217. Residues 248–254 (GVGRPED) form an RNA binding region. Asp267 acts as the Nucleophile in catalysis. The tract at residues 272-276 (TRNAR) is RNA binding; important for wobble base 34 recognition. 4 residues coordinate Zn(2+): Cys305, Cys307, Cys310, and His337.

It belongs to the queuine tRNA-ribosyltransferase family. As to quaternary structure, homodimer. Within each dimer, one monomer is responsible for RNA recognition and catalysis, while the other monomer binds to the replacement base PreQ1. Requires Zn(2+) as cofactor.

It catalyses the reaction 7-aminomethyl-7-carbaguanine + guanosine(34) in tRNA = 7-aminomethyl-7-carbaguanosine(34) in tRNA + guanine. The protein operates within tRNA modification; tRNA-queuosine biosynthesis. Functionally, catalyzes the base-exchange of a guanine (G) residue with the queuine precursor 7-aminomethyl-7-deazaguanine (PreQ1) at position 34 (anticodon wobble position) in tRNAs with GU(N) anticodons (tRNA-Asp, -Asn, -His and -Tyr). Catalysis occurs through a double-displacement mechanism. The nucleophile active site attacks the C1' of nucleotide 34 to detach the guanine base from the RNA, forming a covalent enzyme-RNA intermediate. The proton acceptor active site deprotonates the incoming PreQ1, allowing a nucleophilic attack on the C1' of the ribose to form the product. After dissociation, two additional enzymatic reactions on the tRNA convert PreQ1 to queuine (Q), resulting in the hypermodified nucleoside queuosine (7-(((4,5-cis-dihydroxy-2-cyclopenten-1-yl)amino)methyl)-7-deazaguanosine). The polypeptide is Queuine tRNA-ribosyltransferase (Xanthomonas euvesicatoria pv. vesicatoria (strain 85-10) (Xanthomonas campestris pv. vesicatoria)).